Reading from the N-terminus, the 275-residue chain is 2,3,4,5-tetrahydropyridine-2,6-dicarboxylate N-succinyltransferase (275 aa).

Substrate contacts are provided by Arg108 and Asp145.

This sequence belongs to the transferase hexapeptide repeat family. Homotrimer.

It is found in the cytoplasm. The enzyme catalyses (S)-2,3,4,5-tetrahydrodipicolinate + succinyl-CoA + H2O = (S)-2-succinylamino-6-oxoheptanedioate + CoA. The protein operates within amino-acid biosynthesis; L-lysine biosynthesis via DAP pathway; LL-2,6-diaminopimelate from (S)-tetrahydrodipicolinate (succinylase route): step 1/3. This is 2,3,4,5-tetrahydropyridine-2,6-dicarboxylate N-succinyltransferase from Roseobacter denitrificans (strain ATCC 33942 / OCh 114) (Erythrobacter sp. (strain OCh 114)).